We begin with the raw amino-acid sequence, 3491 residues long: Erythronolide synthase EryA1 (3491 aa).

The tract at residues 1-484 is loading domain; the sequence is MSGPRSRTTS…TPRALAEALA (484 aa). The tract at residues 57 to 372 is acyltransferase 1; sequence VFVFPGQGAQ…AAQAFTGGVA (316 aa). Serine 145 functions as the Acyl-ester intermediate; for acyltransferase 1 activity in the catalytic mechanism. Positions 386–410 are disordered; sequence PALCRSSRRPRRKTSRPSPASTGTR. The span at 391–400 shows a compositional bias: basic residues; the sequence is SSRRPRRKTS. The region spanning 412–487 is the Carrier 1 domain; sequence RTCCERLLAV…ALAEALAAGT (76 aa). The residue at position 447 (serine 447) is an O-(pantetheine 4'-phosphoryl)serine. Residues 504–928 form the Ketosynthase family 3 (KS3) 1 domain; sequence GEPVAVVAMA…GTNAHAIIEE (425 aa). Module stretches follow at residues 507-1958 and 1982-3404; these read VAVV…AHLA and IAIV…GFLD. Cysteine 677 acts as the Acyl-thioester intermediate; for beta-ketoacyl synthase 1 activity in catalysis. Residues histidine 812 and histidine 850 each act as for beta-ketoacyl synthase 1 activity in the active site. The acyltransferase 2 stretch occupies residues 1031-1352; it reads VFVFPGQGWQ…ALSRAFAAGV (322 aa). Residue serine 1128 is the Acyl-ester intermediate; for acyltransferase 2 activity of the active site. Residues 1613–1790 are beta-ketoacyl reductase 1; it reads GTVLVTGGTG…ATAVAWGTWA (178 aa). NADP(+)-binding positions include 1621 to 1624, 1644 to 1647, 1673 to 1674, lysine 1723, and 1745 to 1746; these read TGGV, SRSG, DV, and FS. The active-site For beta-ketoacyl reductase 1 activity is the tyrosine 1760. The Carrier 2 domain occupies 1886-1961; sequence EALFELVRSH…TLAAHLAAEL (76 aa). Serine 1921 bears the O-(pantetheine 4'-phosphoryl)serine mark. Residues 1979–2402 form the Ketosynthase family 3 (KS3) 2 domain; sequence DEPIAIVGMA…GTNAHVIIAE (424 aa). Cysteine 2148 (acyl-thioester intermediate; for beta-ketoacyl synthase 2 activity) is an active-site residue. Residues histidine 2283 and histidine 2323 each act as for beta-ketoacyl synthase 2 activity in the active site. Residues 2508–2827 form an acyltransferase 3 region; it reads VFVFPGQGAQ…LADAHTRGVA (320 aa). Serine 2598 acts as the Acyl-ester intermediate; for acyltransferase 3 activity in catalysis. The beta-ketoacyl reductase 2 stretch occupies residues 3057 to 3233; that stretch reads GTILVTGGTA…ATSVAWGLWA (177 aa). Residues 3065 to 3068, 3088 to 3091, 3117 to 3118, lysine 3168, and 3188 to 3189 contribute to the NADP(+) site; these read TAGL, SRRG, DV, and FS. Residue tyrosine 3203 is the For beta-ketoacyl reductase 2 activity of the active site. The region spanning 3329-3407 is the Carrier 3 domain; that stretch reads ERTAELVRLV…AVAGFLDAEL (79 aa). O-(pantetheine 4'-phosphoryl)serine is present on serine 3367. A disordered region spans residues 3456 to 3491; it reads QAADASGTGANPSGDDLGEAGVDELLEALGRELDGD. The span at 3471-3481 shows a compositional bias: acidic residues; the sequence is DLGEAGVDELL.

Homodimer. Erythronolide synthase is composed of EryAI, EryAII and EryAIII multimodular (2 modules) polypeptides each coding for a functional synthase subunit which participates in 2 of the six FAS-like elongation steps required for formation of the polyketide. Module 1, 2, 3, 4, 5, and 6 participating in biosynthesis steps 1, 2, 3, 4, 5, and 6, respectively. The cofactor is pantetheine 4'-phosphate.

It carries out the reaction 6 (S)-methylmalonyl-CoA + propanoyl-CoA + 6 NADPH + 12 H(+) = 6-deoxyerythronolide B + 6 CO2 + 6 NADP(+) + 7 CoA + H2O. It participates in antibiotic biosynthesis; erythromycin biosynthesis. Involved in the biosynthesis of antibiotic erythromycin via the biosynthesis of its aglycone precursor, 6-deoxyerythronolide B (6-dEB). The polypeptide is Erythronolide synthase EryA1 (eryA) (Saccharopolyspora erythraea (Streptomyces erythraeus)).